The primary structure comprises 121 residues: Large ribosomal subunit protein uL14 (121 aa).

The protein belongs to the universal ribosomal protein uL14 family. Part of the 50S ribosomal subunit. Forms a cluster with proteins L3 and L19. In the 70S ribosome, L14 and L19 interact and together make contacts with the 16S rRNA in bridges B5 and B8.

Functionally, binds to 23S rRNA. Forms part of two intersubunit bridges in the 70S ribosome. The chain is Large ribosomal subunit protein uL14 from Bacteroides fragilis (strain ATCC 25285 / DSM 2151 / CCUG 4856 / JCM 11019 / LMG 10263 / NCTC 9343 / Onslow / VPI 2553 / EN-2).